A 575-amino-acid chain; its full sequence is uncharacterized protein (575 aa).

A signal peptide spans 1–28 (MSNLLWKSLVVSPAVLGATLLVSSAAIA). An SLH domain is found at 87–151 (SVSQFSDVQP…DRVNELIATA (65 aa)). Residues 158 to 196 (KQDLATLQRLQEEFSAELATLRGRVDALEARTAELEANQ) are a coiled coil.

Belongs to the OprB family.

This is an uncharacterized protein from Nostoc sp. (strain PCC 7120 / SAG 25.82 / UTEX 2576).